The primary structure comprises 301 residues: Sulfate adenylyltransferase subunit 2 (301 aa).

Positions 282-301 are disordered; sequence RLIDRDEAGSMEKKKREGYF.

This sequence belongs to the PAPS reductase family. CysD subfamily. Heterodimer composed of CysD, the smaller subunit, and CysN.

The enzyme catalyses sulfate + ATP + H(+) = adenosine 5'-phosphosulfate + diphosphate. It participates in sulfur metabolism; hydrogen sulfide biosynthesis; sulfite from sulfate: step 1/3. In terms of biological role, with CysN forms the ATP sulfurylase (ATPS) that catalyzes the adenylation of sulfate producing adenosine 5'-phosphosulfate (APS) and diphosphate, the first enzymatic step in sulfur assimilation pathway. APS synthesis involves the formation of a high-energy phosphoric-sulfuric acid anhydride bond driven by GTP hydrolysis by CysN coupled to ATP hydrolysis by CysD. The sequence is that of Sulfate adenylyltransferase subunit 2 from Chelativorans sp. (strain BNC1).